The following is a 305-amino-acid chain: tRNA dimethylallyltransferase (305 aa).

14–21 provides a ligand contact to ATP; it reads GPTTSGKT. 16–21 is a binding site for substrate; sequence TTSGKT. Interaction with substrate tRNA stretches follow at residues 39–42, 163–167, and 243–248; these read DSAL, QRITR, and RCVGYR.

The protein belongs to the IPP transferase family. In terms of assembly, monomer. Mg(2+) serves as cofactor.

It carries out the reaction adenosine(37) in tRNA + dimethylallyl diphosphate = N(6)-dimethylallyladenosine(37) in tRNA + diphosphate. In terms of biological role, catalyzes the transfer of a dimethylallyl group onto the adenine at position 37 in tRNAs that read codons beginning with uridine, leading to the formation of N6-(dimethylallyl)adenosine (i(6)A). The sequence is that of tRNA dimethylallyltransferase from Ruthia magnifica subsp. Calyptogena magnifica.